Reading from the N-terminus, the 295-residue chain is Glycine--tRNA ligase alpha subunit (295 aa).

The protein belongs to the class-II aminoacyl-tRNA synthetase family. Tetramer of two alpha and two beta subunits.

The protein localises to the cytoplasm. It catalyses the reaction tRNA(Gly) + glycine + ATP = glycyl-tRNA(Gly) + AMP + diphosphate. The chain is Glycine--tRNA ligase alpha subunit from Prochlorococcus marinus (strain MIT 9215).